Here is a 391-residue protein sequence, read N- to C-terminus: Putative 1-acyl-sn-glycerol-3-phosphate acyltransferase acl-12 (391 aa).

2 helical membrane passes run 47–67 (FFFMTAWVVPVACVITVSLLF) and 84–104 (LCAMVNAHWNAVSVFVGATVT). The HXXXXD motif motif lies at 124 to 129 (HLGLLD).

Belongs to the 1-acyl-sn-glycerol-3-phosphate acyltransferase family.

It is found in the membrane. It catalyses the reaction a 1-acyl-sn-glycero-3-phosphate + an acyl-CoA = a 1,2-diacyl-sn-glycero-3-phosphate + CoA. Its pathway is phospholipid metabolism; CDP-diacylglycerol biosynthesis; CDP-diacylglycerol from sn-glycerol 3-phosphate: step 2/3. Its function is as follows. Converts lysophosphatidic acid (LPA) into phosphatidic acid by incorporating an acyl moiety at the sn-2 position of the glycerol backbone. The polypeptide is Putative 1-acyl-sn-glycerol-3-phosphate acyltransferase acl-12 (acl-12) (Caenorhabditis elegans).